Here is a 342-residue protein sequence, read N- to C-terminus: 4-hydroxy-2-oxovalerate aldolase (342 aa).

One can recognise a Pyruvate carboxyltransferase domain in the interval 7–257 (IWITEVALRD…KTGVDLYKMM (251 aa)). 15-16 (RD) provides a ligand contact to substrate. Aspartate 16 contributes to the Mn(2+) binding site. The active-site Proton acceptor is the histidine 19. Substrate is bound by residues serine 169 and histidine 196. 2 residues coordinate Mn(2+): histidine 196 and histidine 198. Residue tyrosine 287 coordinates substrate.

It belongs to the 4-hydroxy-2-oxovalerate aldolase family.

It catalyses the reaction (S)-4-hydroxy-2-oxopentanoate = acetaldehyde + pyruvate. The chain is 4-hydroxy-2-oxovalerate aldolase (nbaI) from Geobacillus thermodenitrificans (strain NG80-2).